A 445-amino-acid chain; its full sequence is Tubulin beta-4B chain (445 aa).

The MREI motif motif lies at 1-4 (MREI). Glutamine 11 serves as a coordination point for GTP. Position 55 is a phosphothreonine (threonine 55). Lysine 58 is subject to N6-acetyllysine. The GTP site is built by glutamate 69, serine 138, glycine 142, threonine 143, and glycine 144. Residue glutamate 69 coordinates Mg(2+). Residue serine 172 is modified to Phosphoserine; by CDK1. Residues asparagine 204 and asparagine 226 each coordinate GTP. Residues 426–445 (QDATAEEEGEFEEEAEEEVA) are disordered. A compositionally biased stretch (acidic residues) spans 429 to 445 (TAEEEGEFEEEAEEEVA). At glutamate 438 the chain carries 5-glutamyl polyglutamate.

This sequence belongs to the tubulin family. As to quaternary structure, dimer of alpha and beta chains. A typical microtubule is a hollow water-filled tube with an outer diameter of 25 nm and an inner diameter of 15 nM. Alpha-beta heterodimers associate head-to-tail to form protofilaments running lengthwise along the microtubule wall with the beta-tubulin subunit facing the microtubule plus end conferring a structural polarity. Microtubules usually have 13 protofilaments but different protofilament numbers can be found in some organisms and specialized cells. Component of sperm flagellar doublet microtubules. Requires Mg(2+) as cofactor. In terms of processing, some glutamate residues at the C-terminus are polyglycylated, resulting in polyglycine chains on the gamma-carboxyl group. Glycylation is mainly limited to tubulin incorporated into axonemes (cilia and flagella) whereas glutamylation is prevalent in neuronal cells, centrioles, axonemes, and the mitotic spindle. Both modifications can coexist on the same protein on adjacent residues, and lowering polyglycylation levels increases polyglutamylation, and reciprocally. Cilia and flagella glycylation is required for their stability and maintenance. Flagella glycylation controls sperm motility. Post-translationally, some glutamate residues at the C-terminus are polyglutamylated, resulting in polyglutamate chains on the gamma-carboxyl group. Polyglutamylation plays a key role in microtubule severing by spastin (SPAST). SPAST preferentially recognizes and acts on microtubules decorated with short polyglutamate tails: severing activity by SPAST increases as the number of glutamates per tubulin rises from one to eight, but decreases beyond this glutamylation threshold. Glutamylation is also involved in cilia motility. Phosphorylated on Ser-172 by CDK1 during the cell cycle, from metaphase to telophase, but not in interphase. This phosphorylation inhibits tubulin incorporation into microtubules.

The protein localises to the cytoplasm. It is found in the cytoskeleton. Its subcellular location is the flagellum axoneme. Functionally, tubulin is the major constituent of microtubules, a cylinder consisting of laterally associated linear protofilaments composed of alpha- and beta-tubulin heterodimers. Microtubules grow by the addition of GTP-tubulin dimers to the microtubule end, where a stabilizing cap forms. Below the cap, tubulin dimers are in GDP-bound state, owing to GTPase activity of alpha-tubulin. This is Tubulin beta-4B chain (TUBB4B) from Bos taurus (Bovine).